A 200-amino-acid chain; its full sequence is MFVYGSIINPCPTEHVMSVLAISITTVALAEIGDKTQLLSLLLASRYRKPIPIIAAIFLATLANHALAAWLGVVVADYLSPDILKWVLVVSFLTMAGWILIPDKLDGEESISTRGPFVASFIAFFMAEIGDKTQIATSILGAQYADALSWVIVGTTLGMLLANVPVVLIGKLSADKMPLGLIRKVTAGLFLLMALATAFF.

6 consecutive transmembrane segments (helical) span residues threonine 13–glycine 33, isoleucine 53–valine 73, proline 81–isoleucine 101, serine 110–glycine 130, tryptophan 150–glycine 170, and glycine 180–phenylalanine 200.

It belongs to the GDT1 family.

The protein localises to the cell inner membrane. Involved in manganese homeostasis. May function as a manganese exporter. In Vibrio cholerae serotype O1 (strain ATCC 39541 / Classical Ogawa 395 / O395), this protein is Putative manganese exporter.